The following is a 484-amino-acid chain: MHQFTIAELVKGLRNKDFSSTEITQHYLDRIARLDNTYNSYITVTGDVALQQAAAADKRLAAGNTSALCGVPIAHKDIFCTAGVRTSCASKMLDKFIAPYNATIVENYLKAGVVMLGKTNMDEFAMGSSNETSWYGPVKNPWNTHCVPGGSSGGSAAAVAAHLAPAATASDTGGSIRQPAALCGLTGIKPTYGRVSRWGMIAFASSLDQAGILSRTAEDAALLLNDMASYDPKDSTCIERDVPDYTADLNKPLNGLRIGVPKEYFGEGLNPKTAALVEAAIKVYESLGASIHSVSLPHTHLAVPAYYVIAPAECSANLSRFDGVRYGHRCEDPKDLMDLYMRSRSEGFGAEVKRRILVGTYALSAGYYDAYYSKAQKVRRLIKQDFVDAFHHVDVILGPTSPSPAFEFGSKGKDPVAMYLEDIYTIATNLAGLPGLSIPCGLVDDKPVGLQLIGNFFAEAQLLNAAHQFQQATDFHQQTAPGIE.

Active-site charge relay system residues include K76 and S151. S175 (acyl-ester intermediate) is an active-site residue.

Belongs to the amidase family. GatA subfamily. Heterotrimer of A, B and C subunits.

It carries out the reaction L-glutamyl-tRNA(Gln) + L-glutamine + ATP + H2O = L-glutaminyl-tRNA(Gln) + L-glutamate + ADP + phosphate + H(+). Allows the formation of correctly charged Gln-tRNA(Gln) through the transamidation of misacylated Glu-tRNA(Gln) in organisms which lack glutaminyl-tRNA synthetase. The reaction takes place in the presence of glutamine and ATP through an activated gamma-phospho-Glu-tRNA(Gln). The polypeptide is Glutamyl-tRNA(Gln) amidotransferase subunit A (Cellvibrio japonicus (strain Ueda107) (Pseudomonas fluorescens subsp. cellulosa)).